The chain runs to 302 residues: Bifunctional protein FolD (302 aa).

Residues 165 to 167 (GRS), Ser190, and Ile231 each bind NADP(+).

It belongs to the tetrahydrofolate dehydrogenase/cyclohydrolase family. In terms of assembly, homodimer.

The catalysed reaction is (6R)-5,10-methylene-5,6,7,8-tetrahydrofolate + NADP(+) = (6R)-5,10-methenyltetrahydrofolate + NADPH. It carries out the reaction (6R)-5,10-methenyltetrahydrofolate + H2O = (6R)-10-formyltetrahydrofolate + H(+). It functions in the pathway one-carbon metabolism; tetrahydrofolate interconversion. Its function is as follows. Catalyzes the oxidation of 5,10-methylenetetrahydrofolate to 5,10-methenyltetrahydrofolate and then the hydrolysis of 5,10-methenyltetrahydrofolate to 10-formyltetrahydrofolate. In Prochlorococcus marinus (strain MIT 9211), this protein is Bifunctional protein FolD.